We begin with the raw amino-acid sequence, 435 residues long: Serine--tRNA ligase (435 aa).

Residues 41–70 (QVKTEELQAQRNSRSKSIGQAKAKGDHEEA) are disordered. Over residues 49–58 (AQRNSRSKSI) the composition is skewed to polar residues. An L-serine-binding site is contributed by 242–244 (TAE). 273-275 (RSE) contacts ATP. Glutamate 296 is a binding site for L-serine. ATP is bound at residue 360–363 (EISS). An L-serine-binding site is contributed by serine 396.

This sequence belongs to the class-II aminoacyl-tRNA synthetase family. Type-1 seryl-tRNA synthetase subfamily. In terms of assembly, homodimer. The tRNA molecule binds across the dimer.

It localises to the cytoplasm. The enzyme catalyses tRNA(Ser) + L-serine + ATP = L-seryl-tRNA(Ser) + AMP + diphosphate + H(+). The catalysed reaction is tRNA(Sec) + L-serine + ATP = L-seryl-tRNA(Sec) + AMP + diphosphate + H(+). It participates in aminoacyl-tRNA biosynthesis; selenocysteinyl-tRNA(Sec) biosynthesis; L-seryl-tRNA(Sec) from L-serine and tRNA(Sec): step 1/1. In terms of biological role, catalyzes the attachment of serine to tRNA(Ser). Is also able to aminoacylate tRNA(Sec) with serine, to form the misacylated tRNA L-seryl-tRNA(Sec), which will be further converted into selenocysteinyl-tRNA(Sec). The sequence is that of Serine--tRNA ligase from Aliivibrio fischeri (strain MJ11) (Vibrio fischeri).